A 591-amino-acid polypeptide reads, in one-letter code: Ketol-acid reductoisomerase, chloroplastic (591 aa).

The segment at 1–20 is disordered; the sequence is MAAATSSIAPSLSCPSPSSS. The N-terminal 52 residues, 1 to 52, are a transit peptide targeting the chloroplast; that stretch reads MAAATSSIAPSLSCPSPSSSSKTLWSSKARTLALPNIGFLSSSSKSLRSLTA. Thr-53 is modified (N-acetylthreonine). Positions 102–300 constitute a KARI N-terminal Rossmann domain; the sequence is VRGGRDLFKH…ALGSPFTFAT (199 aa). NADP(+)-binding positions include 123 to 130, 156 to 161, and 195 to 199; these read GVIGWGSQ, RKGSRS, and SDAAQ. Residue His-220 is part of the active site. KARI C-terminal knotted domains are found at residues 301 to 449 and 450 to 586; these read TLEQ…RPAG and DLGP…RPEL. Mg(2+) contacts are provided by Asp-309, Glu-313, Glu-486, and Glu-490. Ser-512 contacts substrate.

It belongs to the ketol-acid reductoisomerase family. As to quaternary structure, homodimer. It depends on Mg(2+) as a cofactor.

The protein resides in the plastid. The protein localises to the chloroplast. It carries out the reaction (2R)-2,3-dihydroxy-3-methylbutanoate + NADP(+) = (2S)-2-acetolactate + NADPH + H(+). The enzyme catalyses (2R,3R)-2,3-dihydroxy-3-methylpentanoate + NADP(+) = (S)-2-ethyl-2-hydroxy-3-oxobutanoate + NADPH + H(+). It functions in the pathway amino-acid biosynthesis; L-isoleucine biosynthesis; L-isoleucine from 2-oxobutanoate: step 2/4. It participates in amino-acid biosynthesis; L-valine biosynthesis; L-valine from pyruvate: step 2/4. This chain is Ketol-acid reductoisomerase, chloroplastic, found in Arabidopsis thaliana (Mouse-ear cress).